Consider the following 248-residue polypeptide: Protein G1-like6 (248 aa).

Residues 1–15 (MDRHHHHHHHHHHHM) show a composition bias toward basic residues. Disordered regions lie at residues 1–35 (MDRH…GATQ), 50–84 (GAGS…YESQ), and 198–248 (ARGI…FIIP). Gly residues predominate over residues 17–32 (SGGGQDPAAGDGGAGG). A compositionally biased stretch (low complexity) spans 50-59 (GAGSSSSGAG). Over residues 60 to 69 (TSAGGGGGGP) the composition is skewed to gly residues. Residues 70 to 79 (SPSSSSPSLS) show a composition bias toward low complexity. The ALOG domain maps to 80–207 (RYESQKRRDW…ARGISYEKKK (128 aa)). The Nuclear localization signal signature appears at 205 to 209 (KKKRK). 2 stretches are compositionally biased toward low complexity: residues 212–224 (SSAG…SSEG) and 239–248 (TSASPQFIIP).

It belongs to the plant homeotic and developmental regulators ALOG protein family.

The protein localises to the nucleus. Probable transcription regulator that acts as a developmental regulator by promoting cell growth in response to light. The sequence is that of Protein G1-like6 from Oryza sativa subsp. indica (Rice).